We begin with the raw amino-acid sequence, 110 residues long: Protein SPIRAL1-like 2 (110 aa).

The segment at 28 to 110 (AVNKTPAETE…LDYLFGGGSN (83 aa)) is disordered. Residues 40–52 (AHAPPTQAAAANA) are compositionally biased toward low complexity. Residues 63–82 (LNSNSANNYMRAEGQNTGNF) show a composition bias toward polar residues. A Phosphoserine modification is found at S67. Gly residues predominate over residues 95–110 (PGGGSSLDYLFGGGSN).

This sequence belongs to the SPIRAL1 family. In terms of tissue distribution, ubiquitous.

Its function is as follows. Acts redundantly with SPR1 in maintaining the cortical microtubules organization essential for anisotropic cell growth. This is Protein SPIRAL1-like 2 (SP1L2) from Arabidopsis thaliana (Mouse-ear cress).